We begin with the raw amino-acid sequence, 1378 residues long: DNA-directed RNA polymerase subunit beta (1378 aa).

It belongs to the RNA polymerase beta chain family. In terms of assembly, the RNAP catalytic core consists of 2 alpha, 1 beta, 1 beta' and 1 omega subunit. When a sigma factor is associated with the core the holoenzyme is formed, which can initiate transcription.

It carries out the reaction RNA(n) + a ribonucleoside 5'-triphosphate = RNA(n+1) + diphosphate. Functionally, DNA-dependent RNA polymerase catalyzes the transcription of DNA into RNA using the four ribonucleoside triphosphates as substrates. This chain is DNA-directed RNA polymerase subunit beta, found in Mesorhizobium japonicum (strain LMG 29417 / CECT 9101 / MAFF 303099) (Mesorhizobium loti (strain MAFF 303099)).